Consider the following 569-residue polypeptide: Acyl-CoA transferase FVEG_12629 (569 aa).

It belongs to the CoA-transferase III family.

Acyl-CoA transferase; part of the Fusarium detoxification of benzoxazolinone cluster 2 (FDB2) involved in the degradation of benzoxazolinones produced by the host plant. Maize, wheat, and rye produce the 2 benzoxazinone phytoanticipins 2,4-dihy-droxy-7-methoxy-1,4-benzoxazin-3-one (DIMBOA) and 2,4-dihydroxy-1,4-benzoxazin-3-one (DIBOA) that, due to their inherent instability once released, spontaneously degrade to the more stable corresponding benzoxazolinones, 6-methoxy-2-benzoxazolinone (MBOA) and 2-benzoxazolinone (BOA), respectively. The first step in the detoxification of benzoxazolinones involves the hydrolysis of the cyclic ester bond of benzoxazolinones by the FDB1 cluster gamma-lactamase MBL1 to aminophenols. MBL1 is able to convert BOA into 2-aminophenol (2-AP), as well as MBOA into 5-methoxy-2-aminophenol (2-AMP). The FDB2 cluster N-malonyltransferase FDB2/NAT1 then metabolizes aminophenols via N-malonylation to non-toxic malonamic acids. FDB2/NAT1 converts 2-AP into N-(2-hydroxyphenyl) malonamic acid (HPMA) and 2-AMP into N-(2-hydroxy-4-methoxyphenyl) malonamic acid (HMPMA). The duplicated dienlactone hydrolases DLH1 and DLH2 may provide redundant function for hydrolyzing the lactone moiety in the BOA molecule. The roles of the amidases an other enzymes encoded by the 2 FDB clusters have not been identified so far. The polypeptide is Acyl-CoA transferase FVEG_12629 (Gibberella moniliformis (strain M3125 / FGSC 7600) (Maize ear and stalk rot fungus)).